A 438-amino-acid chain; its full sequence is V-type ATP synthase beta chain (438 aa).

It belongs to the ATPase alpha/beta chains family.

Functionally, produces ATP from ADP in the presence of a proton gradient across the membrane. The V-type beta chain is a regulatory subunit. The chain is V-type ATP synthase beta chain from Protochlamydia amoebophila (strain UWE25).